The sequence spans 926 residues: Storkhead-box protein 2 (926 aa).

Disordered regions lie at residues 1–32 (MKKT…RSEK), 338–391 (EEEK…HLDI), 452–529 (EMPF…SYID), 564–588 (KEPS…YGEL), 632–672 (GVKK…GGVA), 724–803 (LKSH…GTMQ), and 825–926 (LAPK…VTSV). The span at 18–32 (FSDRASDRMRSRSEK) shows a compositional bias: basic and acidic residues. Positions 353–378 (HSGRSKKSRTHRKSHGKSRSHSKTRV) are enriched in basic residues. A compositionally biased stretch (basic and acidic residues) spans 379 to 391 (SKGDPSDGSHLDI). Residues 463–472 (SHSKVHRSHS) show a composition bias toward basic residues. A compositionally biased stretch (basic and acidic residues) spans 473-495 (HTQDRRSRNERSNKAKERSRSMD). Over residues 518-529 (QDDQTPSQSYID) the composition is skewed to polar residues. Residues 632–658 (GVKKLSPSDRQVPHSSREPVGHKEESP) are compositionally biased toward basic and acidic residues. The span at 746–769 (LGTSAAQAMPASQRQQESGGNQEA) shows a compositional bias: polar residues. The segment covering 785–799 (GANKNTEEEKNREDV) has biased composition (basic and acidic residues). Composition is skewed to polar residues over residues 847–884 (MDSS…QNPA) and 914–926 (KPSN…VTSV).

The sequence is that of Storkhead-box protein 2 (STOX2) from Homo sapiens (Human).